The chain runs to 574 residues: Putative ABC transporter ATP-binding protein VVA0347 (574 aa).

ABC transporter domains are found at residues 3 to 244 and 299 to 533; these read IEFS…GIRE and LDVR…ANLT. ATP-binding positions include 37 to 44 and 332 to 339; these read GPSGSGKS and GKNGSGKS.

Belongs to the ABC transporter superfamily.

The protein resides in the cell inner membrane. Probably part of an ABC transporter complex. Responsible for energy coupling to the transport system. The polypeptide is Putative ABC transporter ATP-binding protein VVA0347 (Vibrio vulnificus (strain YJ016)).